We begin with the raw amino-acid sequence, 324 residues long: Adenosine kinase (324 aa).

Residues Ser-8, Asp-12, Ser-36, Gly-48, Asn-52, Phe-102, Phe-116, and 172 to 173 (QQ) contribute to the substrate site. ATP contacts are provided by residues Asn-195, 223–228 (TLGPKG), and Gly-256. Residue Asp-257 coordinates substrate. The Proton acceptor role is filled by Asp-257.

This sequence belongs to the carbohydrate kinase PfkB family. Homodimer. Mg(2+) serves as cofactor.

It catalyses the reaction adenosine + ATP = AMP + ADP + H(+). It carries out the reaction adenosine + GTP = GDP + AMP + H(+). The enzyme catalyses dGTP + adenosine = dGDP + AMP + H(+). Its pathway is purine metabolism; AMP biosynthesis via salvage pathway; AMP from adenosine: step 1/1. Functionally, catalyzes the phosphorylation of adenosine to adenosine monophosphate (AMP). Prefers dGTP and GTP to ATP as phosphate donors in vitro. In Mycobacterium bovis (strain ATCC BAA-935 / AF2122/97), this protein is Adenosine kinase (adoK).